The primary structure comprises 535 residues: Serine/threonine-protein kinase C (535 aa).

Residues Y12–F277 enclose the Protein kinase domain. ATP-binding positions include L18–T26 and K43. D142 serves as the catalytic Proton acceptor. Residues N371–N535 form a disordered region. A compositionally biased stretch (pro residues) spans S402–S421. A compositionally biased stretch (low complexity) spans P422–P435. Pro residues-rich tracts occupy residues A446–S464 and T472–Q498.

The protein belongs to the protein kinase superfamily. Ser/Thr protein kinase family.

It carries out the reaction L-seryl-[protein] + ATP = O-phospho-L-seryl-[protein] + ADP + H(+). The catalysed reaction is L-threonyl-[protein] + ATP = O-phospho-L-threonyl-[protein] + ADP + H(+). The chain is Serine/threonine-protein kinase C (spkC) from Synechocystis sp. (strain ATCC 27184 / PCC 6803 / Kazusa).